Reading from the N-terminus, the 1465-residue chain is Myomesin-2 (1465 aa).

Residues 38–61 (ASTQASSQKSLSQRSSSQRASSQT) are disordered. Residues 41–61 (QASSQKSLSQRSSSQRASSQT) are compositionally biased toward low complexity. 2 consecutive Ig-like C2-type domains span residues 154 to 245 (PEIL…AAVV) and 266 to 371 (PLSS…AFLF). 5 consecutive Fibronectin type-III domains span residues 385-480 (APMD…ALDP), 513-608 (PPTG…AQDV), 614-707 (APGR…VQAA), 710-812 (VPSH…TMPE), and 815-912 (PAYD…ARPG). Ig-like C2-type domains are found at residues 904-1002 (PVLV…EELE), 1130-1211 (PHFA…QDVS), and 1345-1434 (RLIG…VTVS). The tract at residues 1442 to 1465 (IPDMAPPQQAKPKLIPASASAAGQ) is disordered.

As to quaternary structure, interacts with TTN/titin.

It localises to the cytoplasm. The protein localises to the myofibril. Its subcellular location is the sarcomere. It is found in the m line. Functionally, major component of the vertebrate myofibrillar M band. Binds myosin, titin, and light meromyosin. This binding is dose dependent. This chain is Myomesin-2 (MYOM2), found in Homo sapiens (Human).